The following is a 941-amino-acid chain: Lysine-specific demethylase 7A (941 aa).

The segment at 37 to 88 (PVYCVCRQPYDVNRFMIECDICKDWFHGSCVGVEEHHAVDIDLYHCPNCAVL) adopts a PHD-type zinc-finger fold. Positions 97 to 114 (RRNWHRHDYTEIDDGSKP) are linker. In terms of domain architecture, JmjC spans 230-386 (FSDTKMSELV…MQLRCYEMEK (157 aa)). A substrate-binding site is contributed by T279. Residues H282 and D284 each contribute to the Fe cation site. K299 lines the substrate pocket. Residue H354 coordinates Fe cation. Disordered regions lie at residues 597-633 (QSLY…EHEE), 677-700 (TTEE…KEES), and 819-921 (QDLS…MATA). Residue S604 is modified to Phosphoserine. Composition is skewed to basic and acidic residues over residues 618–633 (MKIE…EHEE) and 685–700 (GDEK…KEES). Positions 834–876 (SEISQRVQSRNYVDSSGSSLQNGKYMQNSNLTSGACQISNGSL) are enriched in polar residues.

This sequence belongs to the JHDM1 histone demethylase family. JHDM1D subfamily. Requires Fe(2+) as cofactor.

Its subcellular location is the nucleus. It catalyses the reaction N(6),N(6)-dimethyl-L-lysyl(9)-[histone H3] + 2 2-oxoglutarate + 2 O2 = L-lysyl(9)-[histone H3] + 2 formaldehyde + 2 succinate + 2 CO2. The enzyme catalyses N(6),N(6)-dimethyl-L-lysyl(27)-[histone H3] + 2 2-oxoglutarate + 2 O2 = L-lysyl(27)-[histone H3] + 2 formaldehyde + 2 succinate + 2 CO2. The catalysed reaction is N(6),N(6)-dimethyl-L-lysyl(36)-[histone H3] + 2-oxoglutarate + O2 = N(6)-methyl-L-lysyl(36)-[histone H3] + formaldehyde + succinate + CO2. It carries out the reaction N(6)-methyl-L-lysyl(20)-[histone H4] + 2-oxoglutarate + O2 = L-lysyl(20)-[histone H4] + formaldehyde + succinate + CO2. Histone demethylase required for brain development. Specifically demethylates dimethylated 'Lys-9', 'Lys-27' and 'Lys-36' (H3K9me2, H3K27me2, H3K36me2, respectively) of histone H3 and monomethylated histone H4 'Lys-20' residue (H4K20Me1), thereby playing a central role in histone code. Specifically binds trimethylated 'Lys-4' of histone H3 (H3K4me3), affecting histone demethylase specificity: in presence of H3K4me3, it has no demethylase activity toward H3K9me2, while it has high activity toward H3K27me2. Demethylates H3K9me2 in absence of H3K4me3. Has activity toward H4K20Me1 only when nucleosome is used as a substrate and when not histone octamer is used as substrate. The polypeptide is Lysine-specific demethylase 7A (KDM7A) (Homo sapiens (Human)).